We begin with the raw amino-acid sequence, 245 residues long: uncharacterized protein (245 aa).

This is an uncharacterized protein from Escherichia coli.